Consider the following 191-residue polypeptide: Small ribosomal subunit protein uS7 (191 aa).

Positions 56–80 are disordered; that stretch reads NKSGEQGDGDGEGGGKAGGIKKRSL.

It belongs to the universal ribosomal protein uS7 family. As to quaternary structure, part of the 30S ribosomal subunit. Contacts proteins S9 and S11.

In terms of biological role, one of the primary rRNA binding proteins, it binds directly to 16S rRNA where it nucleates assembly of the head domain of the 30S subunit. Is located at the subunit interface close to the decoding center, probably blocks exit of the E-site tRNA. The chain is Small ribosomal subunit protein uS7 from Coxiella burnetii (strain CbuG_Q212) (Coxiella burnetii (strain Q212)).